A 592-amino-acid chain; its full sequence is Arginine--tRNA ligase (592 aa).

Positions 112–122 (VNPNKELHVGH) match the 'HIGH' region motif.

Belongs to the class-I aminoacyl-tRNA synthetase family. As to quaternary structure, monomer.

The protein resides in the cytoplasm. It catalyses the reaction tRNA(Arg) + L-arginine + ATP = L-arginyl-tRNA(Arg) + AMP + diphosphate. This chain is Arginine--tRNA ligase, found in Thermus thermophilus (strain ATCC 27634 / DSM 579 / HB8).